The sequence spans 146 residues: HTH-type transcriptional regulator FarR (146 aa).

Positions histidine 7 to lysine 139 constitute an HTH marR-type domain. Residues phenylalanine 53–lysine 76 constitute a DNA-binding region (H-T-H motif).

Repressor activity requires the presence of the Integration Host Factor (IHF), which binds to sequences located between FarR binding sites A and C. IHF binding to the promoter region stabilizes the binding of FarR to its binding sites A and C and as a consequence, enhances repression of the farAB operon. In terms of biological role, negatively controls expression of the farAB operon by binding directly to the farAB promoter region. Binds to three sites (sites A, B and C) within the DNA sequence upstream of farA. Also represses its own expression. The chain is HTH-type transcriptional regulator FarR from Neisseria gonorrhoeae.